The following is a 135-amino-acid chain: Cytochrome b-c1 complex subunit 6, mitochondrial (135 aa).

The disordered stretch occupies residues 1 to 70; that stretch reads MSFFRDLLES…ETADPLDTLR (70 aa). Residues 19-64 are compositionally biased toward acidic residues; sequence EPVEDVEVEQPEDAPEEEVSEETVEEEEDDDEDDDEDDEEEEETAD.

The protein belongs to the UQCRH/QCR6 family. As to quaternary structure, component of the ubiquinol-cytochrome c oxidoreductase (cytochrome b-c1 complex, complex III, CIII), a multisubunit enzyme composed of 10 subunits. The complex is composed of 3 respiratory subunits cytochrome b (COB), cytochrome c1 (CYT1) and Rieske protein (RIP1), 2 core protein subunits COR1 and QCR2, and 5 low-molecular weight protein subunits QCR6, QCR7, QCR8, QCR9 and QCR10. The complex exists as an obligatory dimer and forms supercomplexes (SCs) in the inner mitochondrial membrane with a monomer or a dimer of cytochrome c oxidase (complex IV, CIV), resulting in 2 different assemblies (supercomplexes III(2)IV and III(2)IV(2)).

It localises to the mitochondrion inner membrane. Its function is as follows. Component of the ubiquinol-cytochrome c oxidoreductase, a multisubunit transmembrane complex that is part of the mitochondrial electron transport chain which drives oxidative phosphorylation. The complex plays an important role in the uptake of multiple carbon sources present in different host niches. The sequence is that of Cytochrome b-c1 complex subunit 6, mitochondrial from Candida albicans (strain SC5314 / ATCC MYA-2876) (Yeast).